A 562-amino-acid polypeptide reads, in one-letter code: Aureusidin synthase (562 aa).

Cystine bridges form between C71/C86 and C85/C148. Cu cation contacts are provided by H147, H168, H177, H301, H305, and H335. Positions 151 to 168 form a cross-link, 2'-(S-cysteinyl)-histidine (Cys-His); sequence CAGAYNQAGFTNLKLQIH.

Belongs to the tyrosinase family. Monomer. Requires Cu(2+) as cofactor. In terms of processing, glycosylated. Post-translationally, contains probably N- and C-terminal propeptides. In terms of tissue distribution, expressed in petals. Not detected in stems and leaves.

It is found in the vacuole lumen. It carries out the reaction 2',4,4',6'-tetrahydroxychalcone 4'-O-beta-D-glucoside + O2 = aureusidin 6-O-beta-glucoside + H2O. The catalysed reaction is 2 2',3,4,4',6'-pentahydroxychalcone 4'-O-beta-D-glucoside + O2 + 2 H(+) = 2 aureusidin 6-O-beta-glucoside + 2 H2O. The enzyme catalyses 2',3,4,4',6'-pentahydroxychalcone 4'-O-beta-D-glucoside + O2 + H(+) = bracteatin 6-O-beta-glucoside + H2O. H(2)O(2) activates the 3-hydroxylation and oxidative cyclization of tetrahydroxychalcone but inhibits reaction with pentahydroxychalcone. Inhibited by phenylthiourea. Functionally, involved in the biosynthesis of aurones, plant flavonoids that provide yellow coloration to flowers. Can use tetrahydroxychalcone (THC), pentahydroxychalcone (PHC), THC 4'-glucoside and PHC 4'-glucoside as substrates, but not 2'-hydroxychalcone, 4-hydroxychalcone, PHC 3-glucoside, 2',6'-dihydroxy-4,4'-dimethoxychalcone, naringenin, eriodictyol and 4,4',6-trihydroxyaurone. Can also produce bracteatin from PHC. This Antirrhinum majus (Garden snapdragon) protein is Aureusidin synthase (AS1).